The following is a 361-amino-acid chain: Phosphoserine aminotransferase (361 aa).

Residue arginine 43 coordinates L-glutamate. Pyridoxal 5'-phosphate contacts are provided by residues alanine 77–serine 78, tryptophan 103, threonine 153, aspartate 173, and glutamine 196. Residue lysine 197 is modified to N6-(pyridoxal phosphate)lysine. Residue asparagine 238–threonine 239 coordinates pyridoxal 5'-phosphate.

This sequence belongs to the class-V pyridoxal-phosphate-dependent aminotransferase family. SerC subfamily. In terms of assembly, homodimer. Pyridoxal 5'-phosphate serves as cofactor.

Its subcellular location is the cytoplasm. The catalysed reaction is O-phospho-L-serine + 2-oxoglutarate = 3-phosphooxypyruvate + L-glutamate. It catalyses the reaction 4-(phosphooxy)-L-threonine + 2-oxoglutarate = (R)-3-hydroxy-2-oxo-4-phosphooxybutanoate + L-glutamate. It functions in the pathway amino-acid biosynthesis; L-serine biosynthesis; L-serine from 3-phospho-D-glycerate: step 2/3. The protein operates within cofactor biosynthesis; pyridoxine 5'-phosphate biosynthesis; pyridoxine 5'-phosphate from D-erythrose 4-phosphate: step 3/5. Its function is as follows. Catalyzes the reversible conversion of 3-phosphohydroxypyruvate to phosphoserine and of 3-hydroxy-2-oxo-4-phosphonooxybutanoate to phosphohydroxythreonine. The chain is Phosphoserine aminotransferase from Azotobacter vinelandii (strain DJ / ATCC BAA-1303).